Here is a 443-residue protein sequence, read N- to C-terminus: Tubulin epsilon and delta complex protein 2 (443 aa).

Residues 8–33 (RRLVAELRDALDSCAERQRQLEQSLR) adopt a coiled-coil conformation. Disordered regions lie at residues 45-72 (AETP…PSPQ) and 93-146 (GLSK…PWVP). Low complexity predominate over residues 106-124 (LKSGSASTATKASAPPSTS).

As to quaternary structure, interacts with TEDC1. Found in a complex with TEDC1, TEDC2, TUBE1 and TUBD1.

It is found in the cell projection. The protein localises to the cilium. It localises to the cytoplasm. Its subcellular location is the cytoskeleton. The protein resides in the microtubule organizing center. It is found in the centrosome. The protein localises to the centriole. Its function is as follows. Acts as a positive regulator of ciliary hedgehog signaling. Required for centriole stability. The chain is Tubulin epsilon and delta complex protein 2 from Bos taurus (Bovine).